The sequence spans 28 residues: Conotoxin Cl1.2 (28 aa).

In terms of processing, contains 2 disulfide bonds. In terms of tissue distribution, expressed by the venom duct.

The protein resides in the secreted. The sequence is that of Conotoxin Cl1.2 from Californiconus californicus (California cone).